The primary structure comprises 187 residues: Large ribosomal subunit protein uL6c (187 aa).

It belongs to the universal ribosomal protein uL6 family. Part of the 50S ribosomal subunit.

The protein resides in the plastid. It localises to the chloroplast. Binds 23S rRNA. This Thalassiosira pseudonana (Marine diatom) protein is Large ribosomal subunit protein uL6c (rpl6).